The sequence spans 843 residues: RNA-binding protein 25 (843 aa).

Residues 1-30 (MSFPPHLNRPPMGIPALPPGIPPPQFPGFP) are disordered. Over residues 12–30 (MGIPALPPGIPPPQFPGFP) the composition is skewed to pro residues. Positions 87–164 (TTVFVGNISE…KKLLVKVDAK (78 aa)) constitute an RRM domain. An N6-acetyllysine modification is found at lysine 135. 2 disordered regions span residues 171-202 (EWKA…ETKR) and 219-243 (SSEL…KKED). Serine 226 and serine 229 each carry phosphoserine. Residues lysine 261, lysine 273, and lysine 430 each participate in a glycyl lysine isopeptide (Lys-Gly) (interchain with G-Cter in SUMO2) cross-link. Basic and acidic residues-rich tracts occupy residues 280–433 (EISK…KRDR) and 521–573 (RLRD…ERRR). Disordered regions lie at residues 280 to 442 (EISK…DAYE) and 498 to 688 (EFLE…KRKK). The tract at residues 285-644 (RDTHKKLEEE…PNTPGDESPC (360 aa)) is necessary for nuclear speckle localization. A Glycyl lysine isopeptide (Lys-Gly) (interchain with G-Cter in SUMO2) cross-link involves residue lysine 578. Serine 583 bears the Phosphoserine mark. Residues 590 to 599 (KQEKEEKREE) show a composition bias toward basic and acidic residues. Residues 621–630 (SSAPSVSSAS) are compositionally biased toward low complexity. Lysine 671 participates in a covalent cross-link: Glycyl lysine isopeptide (Lys-Gly) (interchain with G-Cter in SUMO2). Over residues 674 to 683 (ASNSPGQPNS) the composition is skewed to polar residues. Residues serine 677 and serine 683 each carry the phosphoserine modification. Residues lysine 688 and lysine 697 each participate in a glycyl lysine isopeptide (Lys-Gly) (interchain with G-Cter in SUMO2) cross-link. Phosphoserine is present on serine 703. Lysine 722 participates in a covalent cross-link: Glycyl lysine isopeptide (Lys-Gly) (interchain with G-Cter in SUMO2). In terms of domain architecture, PWI spans 750-843 (PELFAYPLDW…TEAKKIGLVK (94 aa)).

In terms of assembly, interacts with LUC7L3 and SRRM1. Specifically associates with functional splicing complexes, including Sm proteins and U1, U2, U4, U5 and U6 snRNAs. Associates with exon junction complex (EJC) proteins, including APEX1, DDX39B, NCBP1, RBM8A and RNPS1. Interaction with NCBP1 is RNA-dependent. Sumoylated.

The protein localises to the nucleus speckle. Its subcellular location is the cytoplasm. In terms of biological role, RNA-binding protein that acts as a regulator of alternative pre-mRNA splicing. Involved in apoptotic cell death through the regulation of the apoptotic factor BCL2L1 isoform expression. Modulates the ratio of proapoptotic BCL2L1 isoform S to antiapoptotic BCL2L1 isoform L mRNA expression. When overexpressed, stimulates proapoptotic BCL2L1 isoform S 5'-splice site (5'-ss) selection, whereas its depletion caused the accumulation of antiapoptotic BCL2L1 isoform L. Promotes BCL2L1 isoform S 5'-ss usage through the 5'-CGGGCA-3' RNA sequence. Its association with LUC7L3 promotes U1 snRNP binding to a weak 5' ss in a 5'-CGGGCA-3'-dependent manner. Binds to the exonic splicing enhancer 5'-CGGGCA-3' RNA sequence located within exon 2 of the BCL2L1 pre-mRNA. Also involved in the generation of an abnormal and truncated splice form of SCN5A in heart failure. This Homo sapiens (Human) protein is RNA-binding protein 25 (RBM25).